Reading from the N-terminus, the 299-residue chain is GTPase Era (299 aa).

In terms of domain architecture, Era-type G spans 4–171; it reads KSGFVAILGR…VDILSENLEE (168 aa). Residues 12 to 19 form a G1 region; that stretch reads GRPNVGKS. 12–19 is a binding site for GTP; it reads GRPNVGKS. The tract at residues 38–42 is G2; sequence QTTRN. Residues 59 to 62 are G3; the sequence is DTPG. Residues 59 to 63 and 121 to 124 contribute to the GTP site; these read DTPGI and NKID. Residues 121–124 are G4; that stretch reads NKID. Positions 150-152 are G5; it reads ISA. In terms of domain architecture, KH type-2 spans 202–280; that stretch reads TREEIPHSVA…FLETWVKVKK (79 aa).

The protein belongs to the TRAFAC class TrmE-Era-EngA-EngB-Septin-like GTPase superfamily. Era GTPase family. In terms of assembly, monomer.

It localises to the cytoplasm. The protein localises to the cell membrane. In terms of biological role, an essential GTPase that binds both GDP and GTP, with rapid nucleotide exchange. Plays a role in 16S rRNA processing and 30S ribosomal subunit biogenesis and possibly also in cell cycle regulation and energy metabolism. This chain is GTPase Era, found in Streptococcus gordonii (strain Challis / ATCC 35105 / BCRC 15272 / CH1 / DL1 / V288).